The sequence spans 267 residues: Tryptophan synthase alpha chain (267 aa).

Residues E49 and D60 each act as proton acceptor in the active site.

The protein belongs to the TrpA family. In terms of assembly, tetramer of two alpha and two beta chains.

It carries out the reaction (1S,2R)-1-C-(indol-3-yl)glycerol 3-phosphate + L-serine = D-glyceraldehyde 3-phosphate + L-tryptophan + H2O. It participates in amino-acid biosynthesis; L-tryptophan biosynthesis; L-tryptophan from chorismate: step 5/5. The alpha subunit is responsible for the aldol cleavage of indoleglycerol phosphate to indole and glyceraldehyde 3-phosphate. The sequence is that of Tryptophan synthase alpha chain from Acinetobacter baumannii (strain AB307-0294).